A 193-amino-acid polypeptide reads, in one-letter code: MIQAILVFNNHGKPRLVRFYQRFPEEIQQQIVRETFHLVLKRDDNICNFLEGGSLIGGSDYKLIYRHYATLYFVFCVDSSESELGILDLIQVFVETLDKCFENVCELDLIFHMDKVHYILQEVVMGGMVLETNMNEIVAQIEAQNRLEKSEGGLSAAPARAVSAVKNINLPEIPRNINIGDLNIKVPNLSQFV.

It belongs to the adaptor complexes small subunit family. In terms of assembly, adaptor protein complex 3 (AP-3) is a heterotetramer composed of two large adaptins (delta-type subunit AP3D1 and beta-type subunit AP3B1 or AP3B2), a medium adaptin (mu-type subunit AP3M1 or AP3M2) and a small adaptin (sigma-type subunit APS1 or AP3S2). Interacts with AGAP1. AP-3 associates with the BLOC-1 complex. As to expression, present in all adult tissues examined.

Its subcellular location is the golgi apparatus. It is found in the cytoplasmic vesicle membrane. Its function is as follows. Part of the AP-3 complex, an adaptor-related complex which is not clathrin-associated. The complex is associated with the Golgi region as well as more peripheral structures. It facilitates the budding of vesicles from the Golgi membrane and may be directly involved in trafficking to lysosomes. In concert with the BLOC-1 complex, AP-3 is required to target cargos into vesicles assembled at cell bodies for delivery into neurites and nerve terminals. This Homo sapiens (Human) protein is AP-3 complex subunit sigma-2 (AP3S2).